We begin with the raw amino-acid sequence, 319 residues long: Acetyl-coenzyme A carboxylase carboxyl transferase subunit alpha (319 aa).

Residues 35–296 (NLDEEVQRLR…KAQLLDDLSE (262 aa)) form the CoA carboxyltransferase C-terminal domain.

It belongs to the AccA family. In terms of assembly, acetyl-CoA carboxylase is a heterohexamer composed of biotin carboxyl carrier protein (AccB), biotin carboxylase (AccC) and two subunits each of ACCase subunit alpha (AccA) and ACCase subunit beta (AccD).

The protein localises to the cytoplasm. The enzyme catalyses N(6)-carboxybiotinyl-L-lysyl-[protein] + acetyl-CoA = N(6)-biotinyl-L-lysyl-[protein] + malonyl-CoA. It functions in the pathway lipid metabolism; malonyl-CoA biosynthesis; malonyl-CoA from acetyl-CoA: step 1/1. In terms of biological role, component of the acetyl coenzyme A carboxylase (ACC) complex. First, biotin carboxylase catalyzes the carboxylation of biotin on its carrier protein (BCCP) and then the CO(2) group is transferred by the carboxyltransferase to acetyl-CoA to form malonyl-CoA. The chain is Acetyl-coenzyme A carboxylase carboxyl transferase subunit alpha from Sodalis glossinidius (strain morsitans).